A 310-amino-acid polypeptide reads, in one-letter code: Lymphotoxin-beta (310 aa).

The Cytoplasmic portion of the chain corresponds to 1–27 (MGALGLQGRGGRPQGTGCLLLAVAGAT). A helical; Signal-anchor for type II membrane protein membrane pass occupies residues 28 to 48 (SLVTLLLAVPITVLAVLALVP). At 49–310 (QEQGGLVMES…LGKCLHSANV (262 aa)) the chain is on the extracellular side. The tract at residues 67 to 86 (QGLSKSNGLPSRLHSQIPSS) is disordered. One can recognise a THD domain in the interval 138–293 (PAAHLIGAWM…GKTFFGAVMV (156 aa)). A glycan (N-linked (GlcNAc...) asparagine) is linked at Asn-272.

The protein belongs to the tumor necrosis factor family. As to quaternary structure, heterotrimer of either two LTB and one LTA subunits or (less prevalent) two LTA and one LTB subunits.

It is found in the membrane. In terms of biological role, cytokine that binds to LTBR/TNFRSF3. May play a specific role in immune response regulation. Provides the membrane anchor for the attachment of the heterotrimeric complex to the cell surface. This chain is Lymphotoxin-beta (LTB), found in Marmota monax (Woodchuck).